Consider the following 425-residue polypeptide: Gamma-glutamyl phosphate reductase (425 aa).

The protein belongs to the gamma-glutamyl phosphate reductase family.

The protein localises to the cytoplasm. It catalyses the reaction L-glutamate 5-semialdehyde + phosphate + NADP(+) = L-glutamyl 5-phosphate + NADPH + H(+). It functions in the pathway amino-acid biosynthesis; L-proline biosynthesis; L-glutamate 5-semialdehyde from L-glutamate: step 2/2. Its function is as follows. Catalyzes the NADPH-dependent reduction of L-glutamate 5-phosphate into L-glutamate 5-semialdehyde and phosphate. The product spontaneously undergoes cyclization to form 1-pyrroline-5-carboxylate. This Aromatoleum aromaticum (strain DSM 19018 / LMG 30748 / EbN1) (Azoarcus sp. (strain EbN1)) protein is Gamma-glutamyl phosphate reductase.